A 442-amino-acid chain; its full sequence is Meiotically up-regulated gene 191 protein (442 aa).

Position 361 is a phosphothreonine (T361). Residues 416 to 429 (RNNPSSGESTTLPQ) show a composition bias toward polar residues. The segment at 416–442 (RNNPSSGESTTLPQPSHGKKDKDCVIS) is disordered. Residues 433 to 442 (GKKDKDCVIS) are compositionally biased toward basic and acidic residues.

The protein localises to the cytoplasm. Its subcellular location is the nucleus. In terms of biological role, has a role in meiosis. This is Meiotically up-regulated gene 191 protein (mug191) from Schizosaccharomyces pombe (strain 972 / ATCC 24843) (Fission yeast).